The following is a 101-amino-acid chain: Urease subunit beta (101 aa).

It belongs to the urease beta subunit family. In terms of assembly, heterotrimer of UreA (gamma), UreB (beta) and UreC (alpha) subunits. Three heterotrimers associate to form the active enzyme.

The protein localises to the cytoplasm. The enzyme catalyses urea + 2 H2O + H(+) = hydrogencarbonate + 2 NH4(+). Its pathway is nitrogen metabolism; urea degradation; CO(2) and NH(3) from urea (urease route): step 1/1. The protein is Urease subunit beta of Burkholderia multivorans (strain ATCC 17616 / 249).